A 458-amino-acid polypeptide reads, in one-letter code: Phosphoglucosamine mutase (458 aa).

Residue serine 106 is the Phosphoserine intermediate of the active site. Serine 106, aspartate 247, aspartate 249, and aspartate 251 together coordinate Mg(2+). Position 106 is a phosphoserine (serine 106).

The protein belongs to the phosphohexose mutase family. Requires Mg(2+) as cofactor. In terms of processing, activated by phosphorylation.

The enzyme catalyses alpha-D-glucosamine 1-phosphate = D-glucosamine 6-phosphate. Catalyzes the conversion of glucosamine-6-phosphate to glucosamine-1-phosphate. This is Phosphoglucosamine mutase from Chlamydia trachomatis serovar L2 (strain ATCC VR-902B / DSM 19102 / 434/Bu).